A 413-amino-acid polypeptide reads, in one-letter code: Argininosuccinate synthase (413 aa).

Residues 14 to 22 and alanine 41 each bind ATP; that span reads AYSGGLDTS. L-citrulline contacts are provided by tyrosine 94 and serine 99. ATP is bound at residue glycine 124. 3 residues coordinate L-aspartate: threonine 126, asparagine 130, and aspartate 131. Asparagine 130 is an L-citrulline binding site. Residues arginine 134, serine 185, serine 194, glutamate 270, and tyrosine 282 each contribute to the L-citrulline site.

It belongs to the argininosuccinate synthase family. Type 1 subfamily. In terms of assembly, homotetramer.

Its subcellular location is the cytoplasm. The enzyme catalyses L-citrulline + L-aspartate + ATP = 2-(N(omega)-L-arginino)succinate + AMP + diphosphate + H(+). The protein operates within amino-acid biosynthesis; L-arginine biosynthesis; L-arginine from L-ornithine and carbamoyl phosphate: step 2/3. This chain is Argininosuccinate synthase, found in Hyphomonas neptunium (strain ATCC 15444).